A 299-amino-acid polypeptide reads, in one-letter code: Trans-aconitate 3-methyltransferase (299 aa).

The residue at position 2 (Ser-2) is an N-acetylserine.

This sequence belongs to the methyltransferase superfamily. Tam family.

It localises to the cytoplasm. It carries out the reaction trans-aconitate + S-adenosyl-L-methionine = (E)-2-(methoxycarbonylmethyl)but-2-enedioate + S-adenosyl-L-homocysteine. In terms of biological role, catalyzes the S-adenosylmethionine monomethyl esterification of trans-aconitate and 3-isopropylmalate at high affinity and of other molecules like cis-aconitate, isocitrate, and citrate at lower velocities and affinities. The function of trans-aconitate methylation appears to be in reducing the toxicity of this spontaneous breakdown product of cis-aconitate. The role of 3-isopropylmalate methylation is unclear but may represent a metabolic branch at 3-isopropylmalate, where some of the material is taken in the pathway leading to leucine and some is taken in a pathway to the 3-isopropylmalate methyl ester, a molecule that provides a signal to switch from vegetative to invasive growth in response to amino acid starvation. This is Trans-aconitate 3-methyltransferase (TMT1) from Saccharomyces cerevisiae (strain YJM789) (Baker's yeast).